The chain runs to 119 residues: Hydrogenase maturation factor HypA (119 aa).

Residue His2 participates in Ni(2+) binding. Zn(2+) contacts are provided by Cys73, Cys76, Cys90, and Cys93.

It belongs to the HypA/HybF family.

Functionally, involved in the maturation of [NiFe] hydrogenases. Required for nickel insertion into the metal center of the hydrogenase. This Wolinella succinogenes (strain ATCC 29543 / DSM 1740 / CCUG 13145 / JCM 31913 / LMG 7466 / NCTC 11488 / FDC 602W) (Vibrio succinogenes) protein is Hydrogenase maturation factor HypA.